We begin with the raw amino-acid sequence, 935 residues long: Ribonuclease E (935 aa).

An S1 motif domain is found at 39 to 119 (ANIYKGKITR…GNKGAALTTF (81 aa)). Mg(2+) contacts are provided by D302 and D345. Zn(2+) contacts are provided by C403 and C406. The interval 403 to 406 (CPRC) is required for zinc-mediated homotetramerization and catalytic activity. Disordered stretches follow at residues 571 to 669 (TKSE…DLRK) and 698 to 743 (VQNN…KSPM). Basic and acidic residues-rich tracts occupy residues 593–625 (RSQDRRSSRRPRSENNETERTEEQVRNVRERNQ) and 701–719 (NDEKPVHQNQRSERQERQR). Over residues 720-734 (RTPRHLRAANNQRRR) the composition is skewed to basic residues.

Belongs to the RNase E/G family. RNase E subfamily. Component of the RNA degradosome, which is a multiprotein complex involved in RNA processing and mRNA degradation. Within the RNA degradosome, RNase E assembles into a homotetramer formed by a dimer of dimers. It depends on Zn(2+) as a cofactor. Requires Mg(2+) as cofactor.

Its subcellular location is the cytoplasm. The protein resides in the cell inner membrane. The enzyme catalyses Endonucleolytic cleavage of single-stranded RNA in A- and U-rich regions.. In terms of biological role, endoribonuclease that plays a central role in RNA processing and decay. Required for the maturation of 5S and 16S rRNAs and the majority of tRNAs. Also involved in the degradation of most mRNAs. This is Ribonuclease E from Haemophilus influenzae (strain ATCC 51907 / DSM 11121 / KW20 / Rd).